The chain runs to 48 residues: Large ribosomal subunit protein eL40 (48 aa).

It belongs to the eukaryotic ribosomal protein eL40 family.

The sequence is that of Large ribosomal subunit protein eL40 from Methanospirillum hungatei JF-1 (strain ATCC 27890 / DSM 864 / NBRC 100397 / JF-1).